Consider the following 121-residue polypeptide: Large ribosomal subunit protein bL20 (121 aa).

This sequence belongs to the bacterial ribosomal protein bL20 family.

In terms of biological role, binds directly to 23S ribosomal RNA and is necessary for the in vitro assembly process of the 50S ribosomal subunit. It is not involved in the protein synthesizing functions of that subunit. The chain is Large ribosomal subunit protein bL20 from Methylorubrum extorquens (strain PA1) (Methylobacterium extorquens).